The following is a 325-amino-acid chain: Phospholipid phosphatase-related protein type 1 (325 aa).

3 helical membrane-spanning segments follow: residues 11 to 31, 67 to 87, and 127 to 147; these read YSIIPCFIFVELVIMAGTVLL, FISPLVLYCVLAATPTAIIFI, and FIGVFAFGLFATDIFVNAGQV. A glycan (N-linked (GlcNAc...) asparagine) is linked at N163. The next 3 membrane-spanning stretches (helical) occupy residues 201-218, 230-247, and 257-277; these read AALSIYSALYATMYITST, VLCLGTLCCAFLTGLNRV, and VIGGFILGTAIALFLGLCVVH. N-linked (GlcNAc...) asparagine glycosylation occurs at N316.

It belongs to the PA-phosphatase related phosphoesterase family.

The protein resides in the cell membrane. Its subcellular location is the cell projection. It localises to the neuron projection. May play a role in neurite outgrowth and neurogenesis. This chain is Phospholipid phosphatase-related protein type 1, found in Xenopus tropicalis (Western clawed frog).